We begin with the raw amino-acid sequence, 159 residues long: SsrA-binding protein (159 aa).

Belongs to the SmpB family.

The protein localises to the cytoplasm. Required for rescue of stalled ribosomes mediated by trans-translation. Binds to transfer-messenger RNA (tmRNA), required for stable association of tmRNA with ribosomes. tmRNA and SmpB together mimic tRNA shape, replacing the anticodon stem-loop with SmpB. tmRNA is encoded by the ssrA gene; the 2 termini fold to resemble tRNA(Ala) and it encodes a 'tag peptide', a short internal open reading frame. During trans-translation Ala-aminoacylated tmRNA acts like a tRNA, entering the A-site of stalled ribosomes, displacing the stalled mRNA. The ribosome then switches to translate the ORF on the tmRNA; the nascent peptide is terminated with the 'tag peptide' encoded by the tmRNA and targeted for degradation. The ribosome is freed to recommence translation, which seems to be the essential function of trans-translation. This Bifidobacterium adolescentis (strain ATCC 15703 / DSM 20083 / NCTC 11814 / E194a) protein is SsrA-binding protein.